The sequence spans 367 residues: MAMPRVLCRVRLLIHNDFSVISKYSPVVNSVLINKCARFRHSIRHFRTNFPAGLVLNTSQKQDASSSSSDSDSSDSDEDDVTIEYHRGLPQITVPLPSRKERCRFTLKPISNTVGDFLEMLKKEDRGIDRVVCKTIDGTRIASSTTIETLLQDDFKLLINDNAYNVDSPKQERLTTEEVQGLSDVKTLVNQLYEALNVREHQLQKEVELTTQLETLQQELLPLEEKKLELEQVANRRSNWMAWAGLGLMSVQFGILARLTWWEYSWDIMEPVTYFVTYGTAMAAYAYFVLTREEYILNDVRDRQQLLLLHKKAKKTGFDVNQYNVLKDQIAKLELDLKRLRDPLKLRLPPKAAAKEEKKQVEEKAKE.

Residues 1-12 (MAMPRVLCRVRL) constitute a mitochondrion transit peptide. At 13-232 (LIHNDFSVIS…LEEKKLELEQ (220 aa)) the chain is on the mitochondrial matrix side. Positions 61–80 (KQDASSSSSDSDSSDSDEDD) are disordered. Positions 199-233 (REHQLQKEVELTTQLETLQQELLPLEEKKLELEQV) form a coiled coil. Residues 233 to 253 (VANRRSNWMAWAGLGLMSVQF) form a helical membrane-spanning segment. The Mitochondrial intermembrane segment spans residues 254-262 (GILARLTWW). The chain crosses the membrane as a helical span at residues 263–284 (EYSWDIMEPVTYFVTYGTAMAA). The short motif at 266–276 (WDIMEPVTYFV) is the Selectivity filter element. E270 is a binding site for Ca(2+). The Mitochondrial matrix segment spans residues 285–367 (YAYFVLTREE…KKQVEEKAKE (83 aa)).

This sequence belongs to the MCU (TC 1.A.77) family. In terms of assembly, homotetramer. Component of the uniplex complex, composed of MCU, EMRE, MICU1 and MICU2 in a 4:4:1:1 stoichiometry.

Its subcellular location is the mitochondrion inner membrane. It carries out the reaction Ca(2+)(in) = Ca(2+)(out). Its activity is regulated as follows. MCU channel activity is regulated by the heterodimer composed of MICU1 and MICU2, which act as calcium-sensors. At low calcium levels, MICU1 occludes the pore of the MCU channel, preventing mitochondrial calcium uptake. At higher calcium levels, calcium-binding to MICU1 and MICU2 induces a conformational change that weakens MCU-MICU1 interactions and moves the MICU1-MICU2 heterodimer away from the pore, allowing calcium permeation through the channel. Its function is as follows. Channel-forming and calcium-conducting subunit of the mitochondrial inner membrane calcium uniporter complex (uniplex), which mediates calcium uptake into the mitochondrial matrix. MCU channel activity is regulated by the calcium-sensor subunits of the uniplex MICU1 and MICU2. Mitochondrial calcium homeostasis plays key roles in cellular physiology and regulates ATP production, cytoplasmic calcium signals and activation of cell death pathways. The sequence is that of Calcium uniporter protein, mitochondrial from Tribolium castaneum (Red flour beetle).